The sequence spans 555 residues: Synaptotagmin-14 (555 aa).

At 1 to 24 (MAIEGGERTCGVHELICIRKVSPE) the chain is on the extracellular side. The chain crosses the membrane as a helical; Signal-anchor for type III membrane protein span at residues 25 to 47 (AVGFLSAVGVFIVLMLLLFLYIN). Over 48-555 (KKFCFENVGG…VCRWHALLES (508 aa)) the chain is Cytoplasmic. Disordered stretches follow at residues 76–97 (YNSY…EALG), 157–179 (TPPL…HLSC), and 205–258 (CPSE…PEPE). Positions 211-224 (TGHEAESYHNKGYE) are enriched in basic and acidic residues. C2 domains are found at residues 260-379 (KYGT…SLPV) and 415-550 (SVPE…CRWH).

This sequence belongs to the synaptotagmin family. In terms of assembly, homodimer. Can also form heterodimers. Expressed in heart and testis. Expressed in brain (especially in the cerebellum).

The protein resides in the membrane. In terms of biological role, may be involved in the trafficking and exocytosis of secretory vesicles in non-neuronal tissues. Is Ca(2+)-independent. The protein is Synaptotagmin-14 (Syt14) of Mus musculus (Mouse).